The sequence spans 169 residues: ATP synthase subunit b, sodium ion specific (169 aa).

The helical transmembrane segment at Ser-5–Leu-27 threads the bilayer.

This sequence belongs to the ATPase B chain family. F-type ATPases have 2 components, F(1) - the catalytic core - and F(0) - the membrane proton channel. F(1) has five subunits: alpha(3), beta(3), gamma(1), delta(1), epsilon(1). F(0) has three main subunits: a(1), b(2) and c(10-14). The alpha and beta chains form an alternating ring which encloses part of the gamma chain. F(1) is attached to F(0) by a central stalk formed by the gamma and epsilon chains, while a peripheral stalk is formed by the delta and b chains.

It is found in the cell membrane. In terms of biological role, f(1)F(0) ATP synthase produces ATP from ADP in the presence of a proton or sodium gradient. F-type ATPases consist of two structural domains, F(1) containing the extramembraneous catalytic core and F(0) containing the membrane proton channel, linked together by a central stalk and a peripheral stalk. During catalysis, ATP synthesis in the catalytic domain of F(1) is coupled via a rotary mechanism of the central stalk subunits to proton translocation. Functionally, component of the F(0) channel, it forms part of the peripheral stalk, linking F(1) to F(0). In this organism this enzyme may function as an ATP-driven Na(+) ion pump to generate a Na(+) ion electrochemical gradient rather than as an ATP synthase. This Clostridium paradoxum protein is ATP synthase subunit b, sodium ion specific (atpF).